We begin with the raw amino-acid sequence, 303 residues long: Esterase (303 aa).

An Involved in the stabilization of the negatively charged intermediate by the formation of the oxyanion hole motif is present at residues 79–81 (HGG). Active-site residues include Ser-149 and Glu-244.

It belongs to the 'GDXG' lipolytic enzyme family.

It is found in the secreted. This Acinetobacter venetianus (strain ATCC 31012 / DSM 23050 / BCRC 14357 / CCUG 45561 / CIP 110063 / KCTC 2702 / LMG 19082 / RAG-1) protein is Esterase (est).